The sequence spans 486 residues: B-type cell cycle switch protein ccs52B (486 aa).

Residues 24 to 36 (RLETLSTPPSSAS) carry the PEST motif motif. Over residues 27–36 (TLSTPPSSAS) the composition is skewed to polar residues. Residues 27–57 (TLSTPPSSASPRAISNLSSTPSPSKSSKCSD) form a disordered region. Positions 41 to 53 (SNLSSTPSPSKSS) are enriched in low complexity. The C-box motif lies at 57 to 63 (DRFIPCR). The short motif at 87 to 98 (AYNRLLKSELFG) is the CSM motif element. WD repeat units lie at residues 177–214 (QDDF…VTKL), 218–257 (GPYD…KVRT), 260–297 (GHQT…DFIG), 301–340 (GHKS…PTLR), 343–385 (EHTA…QLNS), 387–428 (DTGS…KVAT), and 431–470 (GHSM…KTPA).

It belongs to the WD repeat CDC20/Fizzy family. As to expression, mostly expressed in shoot apices and, to a lower extent, in roots, especially in root tips, and in hypocotyls. Expressed in nodulation-competent root zone but not in the nodules.

It participates in protein modification; protein ubiquitination. Its function is as follows. Component of the anaphase promoting complex/cyclosome (APC/C), a cell cycle-regulated E3 ubiquitin-protein ligase complex that controls progression through mitosis and the G1 phase of the cell cycle. This is B-type cell cycle switch protein ccs52B from Medicago truncatula (Barrel medic).